The sequence spans 313 residues: Porphobilinogen deaminase (313 aa).

C242 carries the post-translational modification S-(dipyrrolylmethanemethyl)cysteine.

Belongs to the HMBS family. Monomer. Dipyrromethane is required as a cofactor.

It carries out the reaction 4 porphobilinogen + H2O = hydroxymethylbilane + 4 NH4(+). It functions in the pathway porphyrin-containing compound metabolism; protoporphyrin-IX biosynthesis; coproporphyrinogen-III from 5-aminolevulinate: step 2/4. Its function is as follows. Tetrapolymerization of the monopyrrole PBG into the hydroxymethylbilane pre-uroporphyrinogen in several discrete steps. In Pseudomonas putida (strain W619), this protein is Porphobilinogen deaminase.